The sequence spans 356 residues: S-adenosylmethionine:tRNA ribosyltransferase-isomerase (356 aa).

This sequence belongs to the QueA family. In terms of assembly, monomer.

It is found in the cytoplasm. It carries out the reaction 7-aminomethyl-7-carbaguanosine(34) in tRNA + S-adenosyl-L-methionine = epoxyqueuosine(34) in tRNA + adenine + L-methionine + 2 H(+). It functions in the pathway tRNA modification; tRNA-queuosine biosynthesis. Functionally, transfers and isomerizes the ribose moiety from AdoMet to the 7-aminomethyl group of 7-deazaguanine (preQ1-tRNA) to give epoxyqueuosine (oQ-tRNA). The chain is S-adenosylmethionine:tRNA ribosyltransferase-isomerase from Serratia proteamaculans (strain 568).